A 23-amino-acid polypeptide reads, in one-letter code: Hemocyanin subunit 1 (23 aa).

The segment at 1 to 23 is disordered; it reads DSPGGASDTQKQHXVNSXXXKXY.

The protein belongs to the tyrosinase family. Hemocyanin subfamily. Hemolymph.

The protein localises to the secreted. Its subcellular location is the extracellular space. In terms of biological role, hemocyanins are copper-containing oxygen carriers occurring freely dissolved in the hemolymph of many mollusks and arthropods. This is Hemocyanin subunit 1 from Cancer pagurus (Rock crab).